The primary structure comprises 131 residues: Holo-[acyl-carrier-protein] synthase (131 aa).

Mg(2+)-binding residues include aspartate 9 and glutamate 58.

Belongs to the P-Pant transferase superfamily. AcpS family. The cofactor is Mg(2+).

It is found in the cytoplasm. It catalyses the reaction apo-[ACP] + CoA = holo-[ACP] + adenosine 3',5'-bisphosphate + H(+). Its function is as follows. Transfers the 4'-phosphopantetheine moiety from coenzyme A to a Ser of acyl-carrier-protein. The sequence is that of Holo-[acyl-carrier-protein] synthase from Salmonella arizonae (strain ATCC BAA-731 / CDC346-86 / RSK2980).